The primary structure comprises 308 residues: MNLKRIIISGPTGVGKTDLIVEISKNLPIEVISMDSRQIYKYMDIGTAKPDPYQLMLVKHHMIDIIEPNEYFNAFLYQKMAKEIEKEILLRGKIPIYVGGTGLYIDALVKGFFEGVPRDENIRKELSKLNEQEPGILRKMLEEFDPEAASRIHPQDMKRTIRALEVYLKTGKRISELQKQDKSDDFVLIVLNTDRNILYERINIRAEKMIEHGLIDEVKELIEKYDKTLDTFKTIGYREIIDYLDGIYGLETAIHLIKRNTRHYARRQLIYLRRFKNSLWFDPLHSETKEKIVEIISGVYNELSQKKE.

Position 10 to 17 (10 to 17) interacts with ATP; sequence GPTGVGKT. Position 12 to 17 (12 to 17) interacts with substrate; sequence TGVGKT. Residues 35 to 38 are interaction with substrate tRNA; it reads DSRQ.

Belongs to the IPP transferase family. As to quaternary structure, monomer. Mg(2+) is required as a cofactor.

It catalyses the reaction adenosine(37) in tRNA + dimethylallyl diphosphate = N(6)-dimethylallyladenosine(37) in tRNA + diphosphate. Its function is as follows. Catalyzes the transfer of a dimethylallyl group onto the adenine at position 37 in tRNAs that read codons beginning with uridine, leading to the formation of N6-(dimethylallyl)adenosine (i(6)A). In Fervidobacterium nodosum (strain ATCC 35602 / DSM 5306 / Rt17-B1), this protein is tRNA dimethylallyltransferase.